The following is a 488-amino-acid chain: Centrosomal protein cep57l1 (488 aa).

Residues 71–226 (LESEKTHARD…AQVQTSLEVN (156 aa)) are a coiled coil. 2 disordered regions span residues 232–272 (SASS…PPSK) and 311–342 (PRVS…LMSS). A compositionally biased stretch (basic residues) spans 241–250 (RKVKKKKQSK). Composition is skewed to basic and acidic residues over residues 259-270 (PSSKEPLSKEPP) and 314-325 (SQKDPKTVEHKP). A coiled-coil region spans residues 377-403 (KNTDMREDLERELDYLVKQMEIKSDQI). The tract at residues 416–464 (LKKTAKKQPRPPSTTKPAEDEQNIGATDPCTPRNKGNLANGTGTPNSKA) is disordered. The segment covering 452 to 464 (NLANGTGTPNSKA) has biased composition (polar residues).

The protein belongs to the translokin family. Interacts with clip1, mis12, ndc80 and zwint. Interacts with gamma-tubulin.

It is found in the cytoplasm. Its subcellular location is the cytoskeleton. The protein resides in the microtubule organizing center. It localises to the centrosome. The protein localises to the chromosome. It is found in the centromere. Its subcellular location is the kinetochore. The protein resides in the spindle. Functionally, required for spindle microtubule attachment to both kinetochores and centrosomes. Also functions to tether minus-ends of spindle microtubules to centrosomes. May act by forming ring-like structures around microtubules, or by serving as a cross-linker or scaffold at the attachment site. The chain is Centrosomal protein cep57l1 (cep57l1) from Xenopus laevis (African clawed frog).